Reading from the N-terminus, the 446-residue chain is Signal recognition particle 54 kDa protein (446 aa).

Residues 104–111, 184–188, and 242–245 contribute to the GTP site; these read GLQGSGKT, DTAGR, and TKMD.

The protein belongs to the GTP-binding SRP family. SRP54 subfamily. As to quaternary structure, part of the signal recognition particle protein translocation system, which is composed of SRP and FtsY. Archaeal SRP consists of a 7S RNA molecule of 300 nucleotides and two protein subunits: SRP54 and SRP19.

It localises to the cytoplasm. The catalysed reaction is GTP + H2O = GDP + phosphate + H(+). Involved in targeting and insertion of nascent membrane proteins into the cytoplasmic membrane. Binds to the hydrophobic signal sequence of the ribosome-nascent chain (RNC) as it emerges from the ribosomes. The SRP-RNC complex is then targeted to the cytoplasmic membrane where it interacts with the SRP receptor FtsY. This is Signal recognition particle 54 kDa protein from Methanocorpusculum labreanum (strain ATCC 43576 / DSM 4855 / Z).